The chain runs to 58 residues: MAGKFEIYKDKSNKFRFRLKAGNGEVIAVGEAYESKAGCLSGIESVRKNAPDAAVVEV.

It belongs to the UPF0339 family.

The sequence is that of UPF0339 protein TDE_0826 from Treponema denticola (strain ATCC 35405 / DSM 14222 / CIP 103919 / JCM 8153 / KCTC 15104).